Here is a 227-residue protein sequence, read N- to C-terminus: PKHD-type hydroxylase Pden_4677 (227 aa).

One can recognise a Fe2OG dioxygenase domain in the interval His78–Ser178. Positions 96, 98, and 159 each coordinate Fe cation. Residue Arg169 participates in 2-oxoglutarate binding.

The cofactor is Fe(2+). It depends on L-ascorbate as a cofactor.

The sequence is that of PKHD-type hydroxylase Pden_4677 from Paracoccus denitrificans (strain Pd 1222).